A 147-amino-acid polypeptide reads, in one-letter code: Ribonuclease H (147 aa).

The RNase H type-1 domain maps to methionine 1–arginine 142. Mg(2+) contacts are provided by aspartate 10, glutamate 48, aspartate 70, and aspartate 134.

This sequence belongs to the RNase H family. Monomer. The cofactor is Mg(2+).

The protein localises to the cytoplasm. It carries out the reaction Endonucleolytic cleavage to 5'-phosphomonoester.. Functionally, endonuclease that specifically degrades the RNA of RNA-DNA hybrids. This chain is Ribonuclease H, found in Marinobacter nauticus (strain ATCC 700491 / DSM 11845 / VT8) (Marinobacter aquaeolei).